The chain runs to 343 residues: Aspartate-semialdehyde dehydrogenase (343 aa).

NADP(+)-binding positions include 20-23 and 48-49; these read SGAV and RS. Residue Arg-108 participates in phosphate binding. The active-site Acyl-thioester intermediate is Cys-137. Gln-164 contributes to the substrate binding site. Position 167-168 (167-168) interacts with NADP(+); it reads SG. Residue Lys-221 participates in phosphate binding. Arg-243 contributes to the substrate binding site. His-250 (proton acceptor) is an active-site residue. Residue Gln-323 coordinates NADP(+).

This sequence belongs to the aspartate-semialdehyde dehydrogenase family. In terms of assembly, homodimer.

The catalysed reaction is L-aspartate 4-semialdehyde + phosphate + NADP(+) = 4-phospho-L-aspartate + NADPH + H(+). It participates in amino-acid biosynthesis; L-lysine biosynthesis via DAP pathway; (S)-tetrahydrodipicolinate from L-aspartate: step 2/4. The protein operates within amino-acid biosynthesis; L-methionine biosynthesis via de novo pathway; L-homoserine from L-aspartate: step 2/3. Its pathway is amino-acid biosynthesis; L-threonine biosynthesis; L-threonine from L-aspartate: step 2/5. Functionally, catalyzes the NADPH-dependent formation of L-aspartate-semialdehyde (L-ASA) by the reductive dephosphorylation of L-aspartyl-4-phosphate. The polypeptide is Aspartate-semialdehyde dehydrogenase (Prochlorococcus marinus (strain SARG / CCMP1375 / SS120)).